We begin with the raw amino-acid sequence, 307 residues long: Serine/threonine-protein phosphatase 4 catalytic subunit (307 aa).

Asp54, His56, Asp82, and Asn114 together coordinate Mn(2+). The active-site Proton donor is the His115. Mn(2+) contacts are provided by His164 and His238. Leucine methyl ester is present on Leu307.

It belongs to the PPP phosphatase family. PP-4 (PP-X) subfamily. In terms of assembly, serine/threonine-protein phosphatase 4 (PP4) occurs in different assemblies of the catalytic and one or more regulatory subunits. Mn(2+) is required as a cofactor.

Its subcellular location is the cytoplasm. It localises to the nucleus. The protein localises to the cytoskeleton. The protein resides in the microtubule organizing center. It is found in the centrosome. The catalysed reaction is O-phospho-L-seryl-[protein] + H2O = L-seryl-[protein] + phosphate. It catalyses the reaction O-phospho-L-threonyl-[protein] + H2O = L-threonyl-[protein] + phosphate. Protein phosphatase that regulates many processes such as microtubule organization at centrosomes. In Xenopus laevis (African clawed frog), this protein is Serine/threonine-protein phosphatase 4 catalytic subunit (ppp4c).